The following is a 351-amino-acid chain: MAKKLLVMAGGTGGHVFPAIAVARELQKQGWEIRWLGTKDRMEADLVPKHGIPIEFIQISGLKGKGIGALLKAPFAIFKAVMQARKIIKNYQPDAVLGMGGYVSGPGGIAAKLCGVPVILHEQNAVAGLTNVWLSKIACRVLQAFPTAFPNAEVVGNPVREDLAQLEAPEIRFAERGYPINILVMGGSQGARVINQTVPEVAKQLGNNVFISHQVGKGNLGGVEEIYQATGNGIAAEFIDDMAQAYSWADLVICRSGALTVCEIAAAGLPAIFVPYQHKDRQQYLNATYLADGGAAIIIEQQDFTPQTLLNVLQPLIADRRKLTEMAVKARAKATPTAAQRVAEVIIEQAK.

Residues 12-14, Asn-124, Arg-160, Ser-188, Ile-239, 258-263, and Gln-283 contribute to the UDP-N-acetyl-alpha-D-glucosamine site; these read TGG and ALTVCE.

This sequence belongs to the glycosyltransferase 28 family. MurG subfamily.

The protein localises to the cell inner membrane. The enzyme catalyses di-trans,octa-cis-undecaprenyl diphospho-N-acetyl-alpha-D-muramoyl-L-alanyl-D-glutamyl-meso-2,6-diaminopimeloyl-D-alanyl-D-alanine + UDP-N-acetyl-alpha-D-glucosamine = di-trans,octa-cis-undecaprenyl diphospho-[N-acetyl-alpha-D-glucosaminyl-(1-&gt;4)]-N-acetyl-alpha-D-muramoyl-L-alanyl-D-glutamyl-meso-2,6-diaminopimeloyl-D-alanyl-D-alanine + UDP + H(+). It functions in the pathway cell wall biogenesis; peptidoglycan biosynthesis. Cell wall formation. Catalyzes the transfer of a GlcNAc subunit on undecaprenyl-pyrophosphoryl-MurNAc-pentapeptide (lipid intermediate I) to form undecaprenyl-pyrophosphoryl-MurNAc-(pentapeptide)GlcNAc (lipid intermediate II). This chain is UDP-N-acetylglucosamine--N-acetylmuramyl-(pentapeptide) pyrophosphoryl-undecaprenol N-acetylglucosamine transferase, found in Actinobacillus pleuropneumoniae serotype 7 (strain AP76).